Here is a 442-residue protein sequence, read N- to C-terminus: 3-dehydroquinate synthase, chloroplastic (442 aa).

The N-terminal 61 residues, Met-1–Ser-61, are a transit peptide targeting the chloroplast. NAD(+) is bound by residues Asn-119, Asp-150 to Glu-152, Lys-155, Gly-183 to Asp-188, Thr-208 to Thr-209, Lys-221, Lys-230, and Thr-248 to Thr-251. Glu-263 lines the a divalent metal cation pocket. An NAD(+)-binding site is contributed by Lys-305. Positions 326 and 343 each coordinate a divalent metal cation.

The protein belongs to the sugar phosphate cyclases superfamily. Dehydroquinate synthase family. In terms of assembly, homodimer. It depends on a divalent metal cation as a cofactor. The cofactor is NAD(+). Highly expressed in roots. Lower expression in stems, flowers and cotyledons. Barely detected in leaves.

The protein localises to the plastid. It is found in the chloroplast. The enzyme catalyses 7-phospho-2-dehydro-3-deoxy-D-arabino-heptonate = 3-dehydroquinate + phosphate. It functions in the pathway metabolic intermediate biosynthesis; chorismate biosynthesis; chorismate from D-erythrose 4-phosphate and phosphoenolpyruvate: step 2/7. In terms of biological role, catalyzes the second step in the shikimate pathway. This is 3-dehydroquinate synthase, chloroplastic (DHQS) from Solanum lycopersicum (Tomato).